Reading from the N-terminus, the 1663-residue chain is Centrosomal protein of 152 kDa (1663 aa).

Positions 1–60 (MSIDFDSGALQTQQEDEEYDKEDYAREQELQQLLTDLPHDMLDDSLSSSPEPSYSDCSGH) are disordered. Positions 44-57 (DSLSSSPEPSYSDC) are enriched in low complexity. Coiled-coil stretches lie at residues 266-516 (LQVL…ARLG), 571-664 (ELER…KHLL), 696-796 (QDKK…VTAK), 843-886 (SDCI…VEVA), 946-977 (DFTV…ALLK), 1014-1047 (RNKL…AERL), and 1182-1288 (VQQL…KNDM). 2 disordered regions span residues 1383-1408 (ETTQ…NQNI) and 1595-1628 (KRKD…SDVG). Polar residues predominate over residues 1603–1613 (RKYSNKIQEPS).

It belongs to the CEP152 family.

Its subcellular location is the cytoplasm. The protein localises to the cytoskeleton. It is found in the microtubule organizing center. The protein resides in the centrosome. It localises to the centriole. Functionally, necessary for centrosome duplication; the function also seems to involve cep63, cdk5rap2 and wdr62 through a stepwise assembled complex at the centrosome that recruits cdk2 required for centriole duplication. Acts as a molecular scaffold facilitating the interaction of plk4 and cpap, 2 molecules involved in centriole formation. Also plays a key role in deuterosome-mediated centriole amplification in multiciliated that can generate more than 100 centrioles. Overexpression of cep152 can drive amplification of centrioles. The polypeptide is Centrosomal protein of 152 kDa (cep152) (Xenopus laevis (African clawed frog)).